We begin with the raw amino-acid sequence, 427 residues long: Glucan 1,3-beta-glucosidase 2 (427 aa).

Residues 1 to 17 form the signal peptide; sequence MLISTFIISSLLSIALA. The Proton donor role is filled by Glu217. Cystine bridges form between Cys299/Cys426 and Cys324/Cys355. Glu316 serves as the catalytic Nucleophile.

It belongs to the glycosyl hydrolase 5 (cellulase A) family.

It localises to the secreted. The enzyme catalyses Successive hydrolysis of beta-D-glucose units from the non-reducing ends of (1-&gt;3)-beta-D-glucans, releasing alpha-glucose.. Beta-glucanases participate in the metabolism of beta-glucan, the main structural component of the cell wall. It could also function biosynthetically as a transglycosylase. The sequence is that of Glucan 1,3-beta-glucosidase 2 (EXG2) from Wickerhamomyces anomalus (Yeast).